The chain runs to 361 residues: uncharacterized protein (361 aa).

This is an uncharacterized protein from Methanothermobacter thermautotrophicus (Methanobacterium thermoformicicum).